The following is a 386-amino-acid chain: Orphan methyltransferase M.SssI (386 aa).

The SAM-dependent MTase C5-type domain occupies 11–386 (LRVFEAFAGI…LEAIIDKIGG (376 aa)). Residue Cys141 is part of the active site.

The protein belongs to the class I-like SAM-binding methyltransferase superfamily. C5-methyltransferase family.

The enzyme catalyses a 2'-deoxycytidine in DNA + S-adenosyl-L-methionine = a 5-methyl-2'-deoxycytidine in DNA + S-adenosyl-L-homocysteine + H(+). This de novo methylase acts completely and exclusively on CG residues in DNA; methylates unmethylated and hemi-methylated DNA. This chain is Orphan methyltransferase M.SssI (sssIM), found in Spiroplasma monobiae (strain ATCC 33825 / MQ-1).